Consider the following 383-residue polypeptide: Geranylgeranyl pyrophosphate synthase esdpD (383 aa).

K88, R91, and H120 together coordinate isopentenyl diphosphate. Mg(2+) contacts are provided by D150 and D154. R159 contacts dimethylallyl diphosphate. Residue R160 participates in isopentenyl diphosphate binding. Dimethylallyl diphosphate contacts are provided by K237, T238, and Q271. Residue D274 coordinates Mg(2+). Dimethylallyl diphosphate is bound by residues N278, K288, and K298.

It belongs to the FPP/GGPP synthase family. Mg(2+) is required as a cofactor.

It carries out the reaction isopentenyl diphosphate + dimethylallyl diphosphate = (2E)-geranyl diphosphate + diphosphate. The catalysed reaction is isopentenyl diphosphate + (2E)-geranyl diphosphate = (2E,6E)-farnesyl diphosphate + diphosphate. The enzyme catalyses isopentenyl diphosphate + (2E,6E)-farnesyl diphosphate = (2E,6E,10E)-geranylgeranyl diphosphate + diphosphate. It functions in the pathway secondary metabolite biosynthesis; terpenoid biosynthesis. Functionally, geranylgeranyl pyrophosphate synthase; part of the cluster that mediates the biosynthesis of shearones, diterpenoid pyrones (DPs) which are structurally diverse meroterpenoids consisting of a diterpene linked by a pyrone, and which may exhibit a range of bioactivities. Within the pathway, esdpD takes part to the biosynthesis of the molecular scaffold by providing geranylgeranyl pyrophosphate (GGPP) to the prenyltransferase esdpC for C-3 geranylgeranylation of the alpha-pyrone. The molecular scaffold is commonly biosynthesized by a series of enzymes including the non-reducing polyketide synthase (NR-PKS) esdpA that generates an alpha-pyrone; the prenyltransferase esdpC that attaches a geranylgeranyl pyrophosphate (GGPP) produced by the GGPP synthase (GGPPS) esdpD onto the pyrone unit; the FAD-dependent monooxygenase esdpE that converts an olefin on the diterpene unit into an epoxide; and the terpene cyclase esdpB that catalyzes the cyclization reactions to give the molecular backbone shearone A. In the modification steps, esdpF oxidizes the hydroxy group to a ketone at C-3 and esdpG then attaches hydroxy groups at both C-11 and C-12. After that, esdpI hydroxylates at C-20 and esdpH hydroxylates at C-6'. The ether bridge is generated by nucleophilic attack of the hydroxy group at C-20 to the carbonyl carbon at C-3. EsdpH can also functions prior to esdpI. The different combinations of these modification enzymes lead to the production of diverse shearone derivatives, shearone I being the end product of the pathway. The alpha-ketoglutarate-dependent dioxygenase esdpJ seems not to be involved in this pathway. The protein is Geranylgeranyl pyrophosphate synthase esdpD of Penicillium shearii (Eupenicillium shearii).